Here is a 320-residue protein sequence, read N- to C-terminus: ATP-dependent 6-phosphofructokinase (320 aa).

Gly-11 lines the ATP pocket. 21–25 (RAVVR) provides a ligand contact to ADP. Residues 72–73 (RY) and 102–105 (GDGS) each bind ATP. Asp-103 lines the Mg(2+) pocket. 125 to 127 (TID) lines the substrate pocket. Asp-127 serves as the catalytic Proton acceptor. Arg-154 is an ADP binding site. Residues Arg-162 and 169–171 (MGR) contribute to the substrate site. ADP contacts are provided by residues 185–187 (GAD), Arg-211, and 213–215 (KKH). Substrate contacts are provided by residues Glu-222, Arg-243, and 249–252 (HVVR).

The protein belongs to the phosphofructokinase type A (PFKA) family. ATP-dependent PFK group I subfamily. Prokaryotic clade 'B1' sub-subfamily. In terms of assembly, homotetramer. Mg(2+) is required as a cofactor.

It localises to the cytoplasm. It carries out the reaction beta-D-fructose 6-phosphate + ATP = beta-D-fructose 1,6-bisphosphate + ADP + H(+). Its pathway is carbohydrate degradation; glycolysis; D-glyceraldehyde 3-phosphate and glycerone phosphate from D-glucose: step 3/4. Its activity is regulated as follows. Allosterically activated by ADP and other diphosphonucleosides, and allosterically inhibited by phosphoenolpyruvate. Catalyzes the phosphorylation of D-fructose 6-phosphate to fructose 1,6-bisphosphate by ATP, the first committing step of glycolysis. The sequence is that of ATP-dependent 6-phosphofructokinase from Enterococcus faecalis (strain ATCC 700802 / V583).